The sequence spans 89 residues: Small ribosomal subunit protein bS20 (89 aa).

The span at 1–11 shows a compositional bias: polar residues; it reads MANIKSQIKRN. The segment at 1 to 22 is disordered; that stretch reads MANIKSQIKRNLTNEKRRLRNK.

Belongs to the bacterial ribosomal protein bS20 family.

Its function is as follows. Binds directly to 16S ribosomal RNA. The chain is Small ribosomal subunit protein bS20 from Frankia casuarinae (strain DSM 45818 / CECT 9043 / HFP020203 / CcI3).